We begin with the raw amino-acid sequence, 141 residues long: ATP synthase epsilon chain (141 aa).

This sequence belongs to the ATPase epsilon chain family. F-type ATPases have 2 components, CF(1) - the catalytic core - and CF(0) - the membrane proton channel. CF(1) has five subunits: alpha(3), beta(3), gamma(1), delta(1), epsilon(1). CF(0) has three main subunits: a, b and c.

It is found in the cell inner membrane. Functionally, produces ATP from ADP in the presence of a proton gradient across the membrane. The chain is ATP synthase epsilon chain from Paraburkholderia phytofirmans (strain DSM 17436 / LMG 22146 / PsJN) (Burkholderia phytofirmans).